The chain runs to 50 residues: Mating-type pheromone BAP1(1) (50 aa).

A disordered region spans residues 1–32 (MDGEGHDINIWGARMSPSPAAAPVSATRGAPW). Low complexity predominate over residues 16–26 (SPSPAAAPVSA). C47 is subject to Cysteine methyl ester. C47 carries the S-farnesyl cysteine lipid modification. A propeptide spans 48–50 (VCH) (removed in mature form).

Its subcellular location is the cell membrane. Activates B-regulated development. The protein is Mating-type pheromone BAP1(1) (BAP1(1)) of Schizophyllum commune (Split gill fungus).